The primary structure comprises 290 residues: MSVYHLPTLLNPLVNAIFNCPEPERSPLKKLFANLKTRRFILLAPPSEYLLNYHDVKSKLPLHDLCYNAEFINSYILLMTENSYINTNSRDSHYETLDGKTVVIQWKNNVIHALNGFHIRRRLKILETKILPNFNDYFEGAADFIILFIDQPLNCEFVPNDYLQCFHNYEKIPKNAHAMPNLSIDSFQQERSSFENILHIHPARLTQLGQLFSSYRTLAPGDDPSRSIFESIVQQAFDGMKSDSLFKNFSNLYDLIHDYFELNLYDDIWSRLTTHFKGHEVDTEKINIFQ.

It belongs to the UPF0507 family.

This Saccharomyces cerevisiae (strain ATCC 204508 / S288c) (Baker's yeast) protein is UPF0507 protein YML003W.